The following is a 278-amino-acid chain: Urease accessory protein UreD (278 aa).

The protein belongs to the UreD family. UreD, UreF and UreG form a complex that acts as a GTP-hydrolysis-dependent molecular chaperone, activating the urease apoprotein by helping to assemble the nickel containing metallocenter of UreC. The UreE protein probably delivers the nickel.

The protein resides in the cytoplasm. Its function is as follows. Required for maturation of urease via the functional incorporation of the urease nickel metallocenter. The polypeptide is Urease accessory protein UreD (Staphylococcus epidermidis (strain ATCC 12228 / FDA PCI 1200)).